Consider the following 511-residue polypeptide: Ribonuclease E/G-like protein (511 aa).

Positions Ser-35–Arg-117 constitute an S1 motif domain. Mg(2+)-binding residues include Asp-296 and Asp-339.

The protein belongs to the RNase E/G family. Mg(2+) is required as a cofactor.

The protein localises to the plastid. It localises to the chloroplast stroma. Its function is as follows. Involved in intercistronic processing of primary transcripts from chloroplast operons. The endonucleolytic activity of the enzyme depends on the number of phosphates at the 5' end, is inhibited by structured RNA, and preferentially cleaves A/U-rich sequences. This Porphyra purpurea (Red seaweed) protein is Ribonuclease E/G-like protein (rne).